We begin with the raw amino-acid sequence, 755 residues long: Actin-related protein 5 (755 aa).

Position 7 is a phosphoserine (serine 7). Residue lysine 12 forms a Glycyl lysine isopeptide (Lys-Gly) (interchain with G-Cter in ubiquitin) linkage. Position 24 is a phosphothreonine (threonine 24). Serine 383 carries the post-translational modification Phosphoserine. The tract at residues 418–444 is disordered; sequence QRFLKASQDARQKAKEEKERVAKEEEE. The span at 425–444 shows a compositional bias: basic and acidic residues; that stretch reads QDARQKAKEEKERVAKEEEE.

It belongs to the actin family. In terms of assembly, component of the chromatin-remodeling INO80 complex, at least composed of ARP4, ARP5, ARP8, RVB1, RVB2, TAF14, NHP10, IES1, IES3, IES4, IES6, ACT1, IES2, IES5 and INO80.

The protein localises to the nucleus. In terms of biological role, probably involved in transcription regulation via its interaction with the INO80 complex, a chromatin remodeling complex. In Saccharomyces cerevisiae (strain ATCC 204508 / S288c) (Baker's yeast), this protein is Actin-related protein 5 (ARP5).